A 786-amino-acid polypeptide reads, in one-letter code: Rho GTPase-activating protein 10 (786 aa).

Residues 7-262 form the BAR domain; it reads EFSDCYLDSP…IRQNPKDHKR (256 aa). One can recognise a PH domain in the interval 265-372; it reads QFTAEGYLYV…WLEALGGKEA (108 aa). The Rho-GAP domain maps to 389-574; the sequence is AQLDKMGFTI…ILIENHEKIF (186 aa). Disordered stretches follow at residues 576–608 and 621–727; these read TPPD…QRTK and EDGD…PPES. Basic residues predominate over residues 599–608; that stretch reads QSKRQGQRTK. Positions 634-651 are enriched in low complexity; that stretch reads PTSSLDSLSSPSPVTTAV. Polar residues predominate over residues 676–688; that stretch reads IPGQTRSSMVQWL. The span at 689-712 shows a compositional bias: low complexity; it reads NPQSPTTTSSNSAVTPLSPGSSPF. The region spanning 728 to 786 is the SH3 domain; the sequence is IRSRKARAVYPCEAEHSSELSFEIGAIFEDVQTSREPGWLEGTLNGKRGLIPQNYVKLL.

In terms of assembly, interacts with PKN3. Interacts with caspase-activated PAK2 proteolytic fragment PAK-2p34; the interaction does not affect GRAF2/ARHGAP10 GTPase activation activity towards RHOA and CDC42. Interacts via its SH3 domain with PTK2/FAK1. Interacts with PTK2B/PYK2; the interaction negatively regulates GRAF2/ARHGAP10 GTPase-activating activity. Interacts with MICAL1 and WDR44; complex formation might transit from GRAF2/ARHGAP10-MICAL1 to GRAF2/ARHGAP10-WDR44 complexes. In terms of processing, phosphorylated. Phosphorylated in vitro by constitutive active PKN3. High levels of expression in heart and skeletal muscle.

The protein resides in the cytoplasm. Its subcellular location is the perinuclear region. It is found in the cell membrane. It localises to the endosome membrane. Its function is as follows. GTPase-activating protein that catalyzes the conversion of active GTP-bound Rho GTPases to their inactive GDP-bound form, thus suppressing various Rho GTPase-mediated cellular processes. Also converts Cdc42 to an inactive GDP-bound state. Essential for PTKB2 regulation of cytoskeletal organization via Rho family GTPases. Inhibits PAK2 proteolytic fragment PAK-2p34 kinase activity and changes its localization from the nucleus to the perinuclear region. Stabilizes PAK-2p34 thereby increasing stimulation of cell death. Associates with MICAL1 on the endosomal membrane to promote Rab8-Rab10-dependent tubule extension. After dissociation with MICAL1, recruits WDR44 which connects the endoplasmic reticulum (ER) with the endosomal tubule, thereby participating in the export of a subset of neosynthesized proteins. The sequence is that of Rho GTPase-activating protein 10 (ARHGAP10) from Homo sapiens (Human).